The chain runs to 274 residues: uncharacterized protein (274 aa).

One can recognise a C2 NT-type domain in the interval 3-141 (IFIPKARRPT…TIRIGISLKQ (139 aa)).

This sequence to yeast YBL086c.

This is an uncharacterized protein from Schizosaccharomyces pombe (strain 972 / ATCC 24843) (Fission yeast).